The chain runs to 638 residues: Threonine--tRNA ligase (638 aa).

One can recognise a TGS domain in the interval 1 to 61 (MPVITLPDGS…DADAQLQIIT (61 aa)). A catalytic region spans residues 243–534 (DHRKIGKALN…LTEEFAGFFP (292 aa)). Residues C334, H385, and H511 each coordinate Zn(2+).

This sequence belongs to the class-II aminoacyl-tRNA synthetase family. Homodimer. Zn(2+) serves as cofactor.

It is found in the cytoplasm. The catalysed reaction is tRNA(Thr) + L-threonine + ATP = L-threonyl-tRNA(Thr) + AMP + diphosphate + H(+). In terms of biological role, catalyzes the attachment of threonine to tRNA(Thr) in a two-step reaction: L-threonine is first activated by ATP to form Thr-AMP and then transferred to the acceptor end of tRNA(Thr). Also edits incorrectly charged L-seryl-tRNA(Thr). The chain is Threonine--tRNA ligase from Alteromonas mediterranea (strain DSM 17117 / CIP 110805 / LMG 28347 / Deep ecotype).